Here is a 368-residue protein sequence, read N- to C-terminus: Peptide chain release factor 2 (368 aa).

Glutamine 245 carries the N5-methylglutamine modification.

The protein belongs to the prokaryotic/mitochondrial release factor family. Post-translationally, methylated by PrmC. Methylation increases the termination efficiency of RF2.

The protein resides in the cytoplasm. Functionally, peptide chain release factor 2 directs the termination of translation in response to the peptide chain termination codons UGA and UAA. In Treponema pallidum (strain Nichols), this protein is Peptide chain release factor 2 (prfB).